The following is a 229-amino-acid chain: Cytochrome c oxidase subunit 2 (229 aa).

Residues 1 to 26 are Mitochondrial intermembrane-facing; that stretch reads MATWAQLNFQDAASPMMEQLHYFHDH. A helical transmembrane segment spans residues 27–48; sequence TMMVLVIITIMVAYIMGTMFFN. At 49–62 the chain is on the mitochondrial matrix side; it reads KDVNRYLLDGQKIE. A helical membrane pass occupies residues 63-82; the sequence is TEWTIVPVFVLVIIAMPSLR. At 83–229 the chain is on the mitochondrial intermembrane side; it reads LLYLLDEVNE…INWIQNMSEA (147 aa). Residues histidine 161, cysteine 196, glutamate 198, cysteine 200, histidine 204, and methionine 207 each contribute to the Cu cation site. Position 198 (glutamate 198) interacts with Mg(2+).

The protein belongs to the cytochrome c oxidase subunit 2 family. Component of the cytochrome c oxidase (complex IV, CIV), a multisubunit enzyme composed of a catalytic core of 3 subunits and several supernumerary subunits. The complex exists as a monomer or a dimer and forms supercomplexes (SCs) in the inner mitochondrial membrane with ubiquinol-cytochrome c oxidoreductase (cytochrome b-c1 complex, complex III, CIII). Cu cation is required as a cofactor.

The protein localises to the mitochondrion inner membrane. It carries out the reaction 4 Fe(II)-[cytochrome c] + O2 + 8 H(+)(in) = 4 Fe(III)-[cytochrome c] + 2 H2O + 4 H(+)(out). Its function is as follows. Component of the cytochrome c oxidase, the last enzyme in the mitochondrial electron transport chain which drives oxidative phosphorylation. The respiratory chain contains 3 multisubunit complexes succinate dehydrogenase (complex II, CII), ubiquinol-cytochrome c oxidoreductase (cytochrome b-c1 complex, complex III, CIII) and cytochrome c oxidase (complex IV, CIV), that cooperate to transfer electrons derived from NADH and succinate to molecular oxygen, creating an electrochemical gradient over the inner membrane that drives transmembrane transport and the ATP synthase. Cytochrome c oxidase is the component of the respiratory chain that catalyzes the reduction of oxygen to water. Electrons originating from reduced cytochrome c in the intermembrane space (IMS) are transferred via the dinuclear copper A center (CU(A)) of subunit 2 and heme A of subunit 1 to the active site in subunit 1, a binuclear center (BNC) formed by heme A3 and copper B (CU(B)). The BNC reduces molecular oxygen to 2 water molecules using 4 electrons from cytochrome c in the IMS and 4 protons from the mitochondrial matrix. This is Cytochrome c oxidase subunit 2 (COII) from Sympetrum striolatum (Common darter dragonfly).